Reading from the N-terminus, the 143-residue chain is Putative 2'-deoxynucleoside 5'-phosphate N-hydrolase 1 (143 aa).

Substrate is bound by residues His37, Glu82, and Ser106 to Met108.

It belongs to the 2'-deoxynucleoside 5'-phosphate N-hydrolase 1 family. In terms of assembly, monomer and homodimer.

It carries out the reaction a pyrimidine 2'-deoxyribonucleoside 5'-phosphate + H2O = a pyrimidine nucleobase + 2-deoxy-D-ribose 5-phosphate. It catalyses the reaction a purine 2'-deoxyribonucleoside 5'-phosphate + H2O = a purine nucleobase + 2-deoxy-D-ribose 5-phosphate. Its function is as follows. Catalyzes the cleavage of the N-glycosidic bond of deoxyribonucleoside 5'-monophosphates to yield deoxyribose 5-phosphate and a purine or pyrimidine base. The sequence is that of Putative 2'-deoxynucleoside 5'-phosphate N-hydrolase 1 from Thermofilum pendens (strain DSM 2475 / Hrk 5).